Reading from the N-terminus, the 116-residue chain is Putative pterin-4-alpha-carbinolamine dehydratase 1 (116 aa).

Belongs to the pterin-4-alpha-carbinolamine dehydratase family.

The catalysed reaction is (4aS,6R)-4a-hydroxy-L-erythro-5,6,7,8-tetrahydrobiopterin = (6R)-L-erythro-6,7-dihydrobiopterin + H2O. The sequence is that of Putative pterin-4-alpha-carbinolamine dehydratase 1 from Gloeobacter violaceus (strain ATCC 29082 / PCC 7421).